The chain runs to 265 residues: Mlc titration factor A (265 aa).

4 residues coordinate Zn(2+): His-111, His-148, His-152, and Glu-211.

Belongs to the MtfA family. Interacts with Mlc. Zn(2+) is required as a cofactor.

The protein resides in the cytoplasm. In terms of biological role, involved in the modulation of the activity of the glucose-phosphotransferase system (glucose-PTS). Interacts with the transcriptional repressor Mlc, preventing its interaction with DNA and leading to the modulation of expression of genes regulated by Mlc, including ptsG, which encodes the PTS system glucose-specific EIICB component. Its function is as follows. Shows zinc-dependent metallopeptidase activity. The polypeptide is Mlc titration factor A (Escherichia coli O6:K15:H31 (strain 536 / UPEC)).